We begin with the raw amino-acid sequence, 460 residues long: uncharacterized protein (460 aa).

The 59-residue stretch at 9 to 67 folds into the TRAM domain; it reads NFKKNDIFEAEVLDLTHEGQGVVKIDSFPFFVDNALPGERIKMHVLKVGKSFGFGRVDE. 4 residues coordinate S-adenosyl-L-methionine: Gln-292, Tyr-321, Glu-342, and Asp-390. Cys-417 functions as the Nucleophile in the catalytic mechanism.

It belongs to the class I-like SAM-binding methyltransferase superfamily. RNA M5U methyltransferase family.

This is an uncharacterized protein from Lactococcus lactis subsp. lactis (strain IL1403) (Streptococcus lactis).